A 369-amino-acid polypeptide reads, in one-letter code: MYAVEDRAHSGHHPPPLSMDRIPPPSTMYPSSAGPSAMVSPAGQPEPESLSTVHDGRIWSLQVVQQPIRARMCGFGDKDRRPITPPPCIRLIVKDAQTQKEVDINSLDSSFYVVMADLWNADGTHEVNLVKHSATSPSISTAMSSSYPPPPHPTSSDYPASYQTNPYGQPVGQPVGQPVGYAGVGNYYGGSTQLQYQNAYPNPQAQYYQPMYGGMAQPQMPAAQPVTPGPGGMFTRNLIGCLSASAYRLYDTEDKIGVWFVLQDLSVRTEGIFRLKFSFVNVGKSVSDLPQSDIAEVINKGTAPILASTFSEPFQVFSAKKFPGVIESTPLSKVFANQGIKIPIRKDGVKGQGSRGRHSDEDDGLDNEY.

Disordered regions lie at residues 1–54, 138–174, and 346–369; these read MYAV…STVH, SIST…VGQP, and KDGV…DNEY. Positions 13–27 are enriched in pro residues; sequence HPPPLSMDRIPPPST. Positions 53–345 constitute a Velvet domain; the sequence is VHDGRIWSLQ…ANQGIKIPIR (293 aa).

It belongs to the velvet family. VelB subfamily. In terms of assembly, component of the heterotrimeric velvet complex composed of laeA, veA and velB; VeA acting as a bridging protein between laeA and velB. Interacts directly with veA. Forms a heterodimeric complex with vosA; the formation of the velB-vosA complex is light-dependent.

It localises to the nucleus. The protein resides in the cytoplasm. Functionally, component of the velvet transcription factor complex that controls sexual/asexual developmental ratio in response to light, promoting sexual development in the darkness while stimulating asexual sporulation under illumination. The velvet complex acts as a global regulator for secondary metabolite gene expression. Component of the velB-VosA heterodimeric complex that plays a dual role in activating genes associated with spore maturation and repressing certain development-associated genes. The velB-VosA complex binds DNA through the DNA-binding domain of vosA that recognizes an 11-nucleotide consensus sequence 5'-CTGGCCGCGGC-3' consisting of two motifs in the promoters of key developmental regulatory genes. The vosA-velB complex binds to the beta-glucan synthase fksA gene promoter in asexual spores for repression. This Emericella nidulans (strain FGSC A4 / ATCC 38163 / CBS 112.46 / NRRL 194 / M139) (Aspergillus nidulans) protein is Velvet complex subunit B.